We begin with the raw amino-acid sequence, 544 residues long: Histone-arginine methyltransferase CARMER (544 aa).

The SAM-dependent MTase PRMT-type domain maps to 150 to 459; that stretch reads ASQYFQFYGY…QSYDVTIDLH (310 aa). S-adenosyl-L-methionine-binding residues include Gln-163, Arg-172, Gly-196, Glu-218, Glu-247, and Thr-275. A compositionally biased stretch (polar residues) spans 505 to 520; sequence DTQQQQQGSRNSNSML. Positions 505 to 527 are disordered; the sequence is DTQQQQQGSRNSNSMLNGGLSVN. Asymmetric dimethylarginine; by autocatalysis is present on Arg-514.

The protein belongs to the class I-like SAM-binding methyltransferase superfamily. Protein arginine N-methyltransferase family. As to quaternary structure, homodimer. In terms of processing, the dimethylated protein is the major form.

The protein localises to the cytoplasm. The protein resides in the nucleus. It catalyses the reaction L-arginyl-[protein] + 2 S-adenosyl-L-methionine = N(omega),N(omega)-dimethyl-L-arginyl-[protein] + 2 S-adenosyl-L-homocysteine + 2 H(+). Its function is as follows. Methylates (mono- and asymmetric dimethylation) the guanidino nitrogens of arginyl residues in proteins. May methylate histone H3 at 'Arg-17' and activate transcription via chromatin remodeling. The sequence is that of Histone-arginine methyltransferase CARMER (Art4) from Drosophila grimshawi (Hawaiian fruit fly).